A 1010-amino-acid chain; its full sequence is MATSSRSERFPITPSTAATNRLTITPNSRVLKSPLTEEIMWKRLKDAGFDEQSIKNRDKAALIAYIAKLESEVYDYQHNMGLLLLEKNELSSQYEEIKASVDESDLTHMREKSAYVSALAEAKKREESLKKDVGIAKECISSLEKTLHEMRAECAETKVSAGSTMSEAHVMIEDALKKLADAEAKMRAAEALQAEANRYHRIAERKLKEVESREDDLTRRLASFKSECETKENEMVIERQTLNERRKSLQQEHERLLDAQVSLNQREDHIFARSQELAELEKGLDTAKTTFEEERKAFEDKKSNLEIALALCAKREEAVSERESSLLKKEQELLVAEEKIASKESELIQNVLANQEVILRKRKSDVEAELECKSKSVEVEIESKRRAWELREVDIKQREDLVGEKEHDLEVQSRALAEKEKDITEKSFNLDEKEKNLVATEEDINRKTTMLEDEKERLRKLDLELQQSLTSLEDKRKRVDSATQKLEALKSETSELSTLEMKLKEELDDLRAQKLEMLAEADRLKVEKAKFEAEWEHIDVKREELRKEAEYITRQREAFSMYLKDERDNIKEERDALRNQHKNDVESLNREREEFMNKMVEEHSEWLSKIQRERADFLLGIEMQKRELEYCIENKREELENSSRDREKAFEQEKKLEEERIQSLKEMAEKELEHVQVELKRLDAERLEIKLDRERREREWAELKDSVEELKVQREKLETQRHMLRAERDEIRHEIEELKKLENLKVALDDMSMAKMQLSNLERSWEKVSALKQKVVSRDDELDLQNGVSTVSNSEDGYNSSMERQNGLTPSSATPFSWIKRCTNLIFKTSPEKSTLMHHYEEEGGVPSEKLKLESSRREEKAYTEGLSIAVERLEAGRKRRGNTSGDETSEPSNNKKRKHDVTQKYSDEADTQSVISSPQNVPEDKHELPSSQTQTPSGMVVISETVKITRVTCETEVTNKVTTLDCSESPSEAGRKMGEETEDGDCNQTGINASETVIHNEAATEDICT.

Coiled-coil stretches lie at residues 82–350 and 404–763; these read LLLL…LIQN and EKEH…NLER. 2 consecutive short sequence motifs (nuclear localization signal) follow at residues 445-452 and 679-686; these read NRKTTMLE and LKRLDAER. Disordered regions lie at residues 787–813, 839–937, and 966–994; these read GVST…PSSA, HYEE…TQTP, and DCSE…GINA. A compositionally biased stretch (basic and acidic residues) spans 849–863; the sequence is EKLKLESSRREEKAY. 2 stretches are compositionally biased toward polar residues: residues 883–893 and 912–921; these read NTSGDETSEPS and TQSVISSPQN.

Belongs to the CRWN family. In terms of assembly, core component of the LINC complex which is composed of inner nuclear membrane SUN domain-containing proteins coupled to outer nuclear membrane WIP proteins, the nucleoskeletal CRWN/LINC proteins, and, possibly, KAKU4. Binds to KAKU4. As to expression, expressed at low levels in roots, leaves, flowers and flower stalks.

Its subcellular location is the nucleus membrane. It is found in the nucleus. The protein resides in the nucleoplasm. It localises to the nucleus lamina. The protein localises to the cytoplasm. Its function is as follows. Component of SUN-protein-containing multivariate complexes also called LINC complexes which link the nucleoskeleton and cytoskeleton by providing versatile outer nuclear membrane attachment sites for cytoskeletal filaments. Required for nucleus structure organization (e.g. size and shape). Involved in the maintenance of interphase chromocenter integrity and organization. This Arabidopsis thaliana (Mouse-ear cress) protein is Protein CROWDED NUCLEI 4.